The sequence spans 286 residues: 2-hydroxy-6-oxo-6-phenylhexa-2,4-dienoate hydrolase (286 aa).

Substrate contacts are provided by residues 42–43 (GG), Asn-51, Asn-111, Thr-180, and Arg-190. His-265 acts as the Proton acceptor in catalysis. A substrate-binding site is contributed by Trp-266.

The protein belongs to the AB hydrolase superfamily. BphD family. In terms of assembly, homodimer.

The enzyme catalyses 2,6-dioxo-6-phenylhexa-3-enoate + H2O = 2-oxopent-4-enoate + benzoate + H(+). The protein operates within xenobiotic degradation; biphenyl degradation; 2-hydroxy-2,4-pentadienoate and benzoate from biphenyl: step 4/4. In terms of biological role, catalyzes an unusual C-C bond hydrolysis of 2-hydroxy-6-oxo-6-phenylhexa-2,4-dienoic acid (HOPDA) to produce benzoic acid and 2-hydroxy-2,4-pentadienoic acid (HPD). This is 2-hydroxy-6-oxo-6-phenylhexa-2,4-dienoate hydrolase from Comamonas testosteroni (Pseudomonas testosteroni).